Here is a 1481-residue protein sequence, read N- to C-terminus: Cystic fibrosis transmembrane conductance regulator (1481 aa).

Topologically, residues 1 to 77 (MQRSPLEKAS…KLINALRRCF (77 aa)) are cytoplasmic. The helical transmembrane segment at 78-98 (FWRFMFYGIILYLGEVTKAVQ) threads the bilayer. The ABC transmembrane type-1 1 domain occupies 81–365 (FMFYGIILYL…WAVQTWYDSL (285 aa)). The Extracellular segment spans residues 99–122 (PLLLGRIIASYDPDNKVERSIAIY). Residues 123–146 (LGIGLCLLFIVRTLLLHPAIFGLH) traverse the membrane as a helical segment. Over 147 to 195 (HIGMQMRIAMFSLIYKKTLKLSSRVLDKISIGQLVSLLSNNLNKFDEGL) the chain is Cytoplasmic. A helical membrane pass occupies residues 196–216 (ALAHFVWIAPLQVTLLMGLLW). Residues 217 to 222 (ELLQAF) lie on the Extracellular side of the membrane. A helical transmembrane segment spans residues 223–243 (TFCGLAFLIVLALLQAGLGKM). The Cytoplasmic portion of the chain corresponds to 244–298 (MMKYRDQRAGKINERLVITSEMIENIQSVKAYCWEEAMEKIIENLRQTELKLTRK). A helical transmembrane segment spans residues 299-319 (AAYVRYLNSSAFFFSGFFVVF). Over 320-339 (LSVLPYALLKGIILRKIFTT) the chain is Extracellular. The chain crosses the membrane as a helical span at residues 340 to 358 (ISFCIVLRMAVTRQFPWAV). Over 359–858 (QTWYDSLGAI…YLRYITVHKS (500 aa)) the chain is Cytoplasmic. ATP contacts are provided by residues Trp-401, 457 to 464 (GSTGAGKT), and Gln-492. The 223-residue stretch at 423 to 645 (NGDNSLFFSN…RPDFSSKLMG (223 aa)) folds into the ABC transporter 1 domain. Cys-523 is lipidated: S-palmitoyl cysteine. Residue Ser-548 is modified to Phosphoserine. The tract at residues 653–831 (TAERRNSIIT…EEINEEDLRD (179 aa)) is disordered R region. A phosphoserine; by PKA mark is found at Ser-659 and Ser-669. Position 685 is a phosphoserine; by PKC (Ser-685). Residue Lys-687 forms a Glycyl lysine isopeptide (Lys-Gly) (interchain with G-Cter in ubiquitin) linkage. Ser-699 carries the post-translational modification Phosphoserine; by PKA. A Phosphoserine modification is found at Ser-711. A Phosphothreonine modification is found at Thr-716. Phosphoserine; by PKA is present on residues Ser-736 and Ser-767. Position 790 is a phosphoserine; by PKC (Ser-790). Ser-795 and Ser-813 each carry phosphoserine; by PKA. A helical membrane pass occupies residues 859–879 (LMFVLIWCLVVFLVEVAASLV). The region spanning 859 to 1155 (LMFVLIWCLV…AVNSSIDVDS (297 aa)) is the ABC transmembrane type-1 2 domain. The Extracellular portion of the chain corresponds to 880–918 (VLCLFPKIFFQDKGNSTKSANNSYAVIITSTSSYYIFYI). Asn-894 and Asn-900 each carry an N-linked (GlcNAc...) asparagine glycan. A discontinuously helical transmembrane segment spans residues 919–939 (YVGVADTLLALGLFRGLPLVH). The Cytoplasmic portion of the chain corresponds to 940–990 (TLITVSKTLHHKMLQSVLQAPMSTLNTLKTGGILNRFSKDIAVLDDLLPLT). Residues 991–1011 (IFDFVQLLLIVIGAVVVVSVL) traverse the membrane as a helical segment. The Extracellular segment spans residues 1012–1013 (QP). The helical transmembrane segment at 1014 to 1034 (YIFLATVPVIAAFILLRAYFL) threads the bilayer. The Cytoplasmic portion of the chain corresponds to 1035 to 1095 (HTSQQLKQLE…TANWFLYLST (61 aa)). Residues 1096 to 1116 (LRWFQMRIEMIFVIFFIAVTF) form a helical membrane-spanning segment. The Extracellular portion of the chain corresponds to 1117–1130 (ISILTTGEGEGRVG). The chain crosses the membrane as a helical span at residues 1131 to 1151 (IILTLAMNIMGTLQWAVNSSI). At 1152–1481 (DVDSLMRSVS…TEEEVQETKL (330 aa)) the chain is on the cytoplasmic side. The ABC transporter 2 domain maps to 1211–1444 (MTVKDLTAKY…KSLFRQAISP (234 aa)). Residues Tyr-1220 and 1245 to 1252 (GRTGSGKS) contribute to the ATP site. An interaction with GORASP2 region spans residues 1387 to 1481 (RTLKQAFANC…TEEEVQETKL (95 aa)). Cys-1396 carries the S-palmitoyl cysteine lipid modification. Residues 1453–1481 (HRNSSRQRSRSNIAALKEETEEEVQETKL) form a disordered region. At Ser-1457 the chain carries Phosphoserine. The segment covering 1471 to 1481 (ETEEEVQETKL) has biased composition (acidic residues). The PDZ-binding motif lies at 1479 to 1481 (TKL).

This sequence belongs to the ABC transporter superfamily. ABCC family. CFTR transporter (TC 3.A.1.202) subfamily. In terms of assembly, monomer; does not require oligomerization for channel activity. May form oligomers in the membrane. Interacts with SLC26A3, SLC26A6 and NHERF1. Interacts with SHANK2. Interacts with MYO6. Interacts (via C-terminus) with GOPC (via PDZ domain); this promotes CFTR internalization and thereby decreases channel activity. Interacts with SLC4A7 through NHERF1. Found in a complex with MYO5B and RAB11A. Interacts with ANO1. Interacts with SLC26A8. Interacts with AHCYL1; the interaction increases CFTR activity. Interacts with CSE1L. The core-glycosylated form interacts with GORASP2 (via PDZ GRASP-type 1 domain) in respone to ER stress. Interacts with MARCHF2; the interaction leads to CFTR ubiqtuitination and degradation. Interacts with ADGRG2. Post-translationally, N-glycosylated. In terms of processing, phosphorylated; cAMP treatment promotes phosphorylation and activates the channel. Dephosphorylation decreases the ATPase activity (in vitro). Phosphorylation at PKA sites activates the channel. Phosphorylation at PKC sites enhances the response to phosphorylation by PKA. Phosphorylated by AMPK; this inhibits channel activity. Ubiquitinated, leading to its degradation in the lysosome. Deubiquitination by USP10 in early endosomes enhances its endocytic recycling to the cell membrane. Ubiquitinated by RNF185 during ER stress. Ubiquitinated by MARCHF2.

It localises to the apical cell membrane. The protein localises to the early endosome membrane. Its subcellular location is the cell membrane. The protein resides in the recycling endosome membrane. It is found in the endoplasmic reticulum membrane. It localises to the nucleus. The enzyme catalyses ATP + H2O + closed Cl(-) channel = ADP + phosphate + open Cl(-) channel.. It catalyses the reaction chloride(in) = chloride(out). The catalysed reaction is hydrogencarbonate(in) = hydrogencarbonate(out). It carries out the reaction ATP + H2O = ADP + phosphate + H(+). Epithelial ion channel that plays an important role in the regulation of epithelial ion and water transport and fluid homeostasis. Mediates the transport of chloride ions across the cell membrane. Possesses an intrinsic ATPase activity and utilizes ATP to gate its channel; the passive flow of anions through the channel is gated by cycles of ATP binding and hydrolysis by the ATP-binding domains. The ion channel is also permeable to HCO(3)(-); selectivity depends on the extracellular chloride concentration. Exerts its function also by modulating the activity of other ion channels and transporters. Contributes to the regulation of the pH and the ion content of the epithelial fluid layer. Modulates the activity of the epithelial sodium channel (ENaC) complex, in part by regulating the cell surface expression of the ENaC complex. May regulate bicarbonate secretion and salvage in epithelial cells by regulating the transporter SLC4A7. Can inhibit the chloride channel activity of ANO1. Plays a role in the chloride and bicarbonate homeostasis during sperm epididymal maturation and capacitation. The chain is Cystic fibrosis transmembrane conductance regulator from Bos taurus (Bovine).